Consider the following 216-residue polypeptide: UPF0502 protein Spea_2482 (216 aa).

It belongs to the UPF0502 family.

The chain is UPF0502 protein Spea_2482 from Shewanella pealeana (strain ATCC 700345 / ANG-SQ1).